The primary structure comprises 156 residues: 6,7-dimethyl-8-ribityllumazine synthase (156 aa).

5-amino-6-(D-ribitylamino)uracil-binding positions include Phe-23, 57–59 (AFE), and 81–83 (AVI). 86–87 (ST) lines the (2S)-2-hydroxy-3-oxobutyl phosphate pocket. His-89 acts as the Proton donor in catalysis. 5-amino-6-(D-ribitylamino)uracil is bound at residue Phe-114. A (2S)-2-hydroxy-3-oxobutyl phosphate-binding site is contributed by Arg-128.

It belongs to the DMRL synthase family.

The enzyme catalyses (2S)-2-hydroxy-3-oxobutyl phosphate + 5-amino-6-(D-ribitylamino)uracil = 6,7-dimethyl-8-(1-D-ribityl)lumazine + phosphate + 2 H2O + H(+). The protein operates within cofactor biosynthesis; riboflavin biosynthesis; riboflavin from 2-hydroxy-3-oxobutyl phosphate and 5-amino-6-(D-ribitylamino)uracil: step 1/2. Catalyzes the formation of 6,7-dimethyl-8-ribityllumazine by condensation of 5-amino-6-(D-ribitylamino)uracil with 3,4-dihydroxy-2-butanone 4-phosphate. This is the penultimate step in the biosynthesis of riboflavin. The sequence is that of 6,7-dimethyl-8-ribityllumazine synthase from Campylobacter lari (strain RM2100 / D67 / ATCC BAA-1060).